The primary structure comprises 1551 residues: Transient receptor potential cation channel subfamily M member-like 2 (1551 aa).

Residues 1–714 are Cytoplasmic-facing; it reads MGKDSFTPLY…WMGTMAMNTR (714 aa). The stretch at 715–730 is an intramembrane region; the sequence is WWKVLVCLYLPVLIFP. The Cytoplasmic segment spans residues 731 to 837; sequence IIYFVPDEQH…DRIMHFYSAP (107 aa). The disordered stretch occupies residues 744–767; it reads AAEREHQKSLNQKSSKVKSHKEKN. The chain crosses the membrane as a helical span at residues 838 to 858; the sequence is FSKFVGNVVGYLAFIFLYAYV. Topologically, residues 859-877 are extracellular; the sequence is VLFNFPRFDPAKTLGGIHP. Residues 878-898 traverse the membrane as a helical segment; sequence TEIVLYFWVFTILIEEIRQLA. Positions 893 and 896 each coordinate Ca(2+). The Cytoplasmic segment spans residues 899-916; the sequence is AKPPKYIKDKVSVYFSDT. A helical transmembrane segment spans residues 917-937; it reads WNFVDIFSLTVFIIAIILRFF. The Ca(2+) site is built by N918 and D921. The Extracellular portion of the chain corresponds to 938–947; the sequence is TNSRIFTASR. Residues 948-968 form a helical membrane-spanning segment; that stretch reads IILSLDIIFFIVRSLQIFSVN. Over 969-980 the chain is Cytoplasmic; it reads RLLGPKLVMIQK. Residues 981–1001 traverse the membrane as a helical segment; it reads MMQDLAQFIIILAVFTIAYGI. The Extracellular portion of the chain corresponds to 1002–1018; it reads ALHAVMFPSPGIYARNN. The N-linked (GlcNAc...) asparagine glycan is linked to N1017. The pore-forming intramembrane region spans 1019–1034; that stretch reads TWVTITSVVQYPYWQM. Positions 1035-1037 match the Selectivity filter motif; sequence YGE. Residues 1035 to 1059 lie on the Extracellular side of the membrane; sequence YGELFLDEIQGEKPKEFGEVDPDGR. The Prevents fast channel inactivation motif lies at 1040–1042; it reads LDE. Residues 1060-1080 traverse the membrane as a helical segment; sequence WLSPLLLAIYMVFTNILLLNL. The Cytoplasmic portion of the chain corresponds to 1081–1116; it reads LIAIFNYTFERVQEDSDKVWKFQRYDLVQEYHSRPV. Residues 1117-1135 lie within the membrane without spanning it; that stretch reads FAPPLVLLGHILIFIRWVW. Residues 1136–1551 are Cytoplasmic-facing; that stretch reads RMCRCGHPPR…KVAKMRDAAF (416 aa). A coiled-coil region spans residues 1184–1209; the sequence is LEERVRALGDRVDCINSQLNRVLDSM. Positions 1394-1546 constitute a Nudix hydrolase domain; that stretch reads WKRTSAGVML…VSILEKVAKM (153 aa). The Nudix box motif lies at 1428-1449; it reads GMVEPGQLVTQALKAEFGEEAM.

This sequence belongs to the transient receptor (TC 1.A.4) family. LTrpC subfamily. TRPM2 sub-subfamily. Homotetramer.

It is found in the cell membrane. Activated by phosphatidylinositol 4,5-bisphosphate (PIP2). Although PIP2 is essential for the channel activation, its contribution to the level of channel activity is minimal. Also activated by diphosphate ribose-2'-phosphate. Upon binding to ADPR, channel activation requires only a short initial cytosolic Ca(2+) increase, then the activation is sustained by the uptake of extracellular Ca(2+). Activated by 2-aminoethyl diphenylborinate (2-APB) in a Ca(2+)-dependent manner. 2-APB prevents the inactivation of the channel. In terms of biological role, nonselective, voltage-independent cation channel that mediates Ca(2+) and to a lesser extent Na(+) influx, leading to increased cytoplasmic Ca(2+) levels. Functions as a ligand-gated ion channel. Binding of ADP-ribose causes a conformation change; the channel is primed but still requires Ca(2+) binding to trigger channel opening. May have ADP-ribose pyrophosphatase activity which reduces ADP-ribose levels induced by oxidative stress, thus preventing the channel activation by reactive oxygen species. This chain is Transient receptor potential cation channel subfamily M member-like 2, found in Nematostella vectensis (Starlet sea anemone).